We begin with the raw amino-acid sequence, 85 residues long: UPF0386 protein Atu1321 (85 aa).

Belongs to the UPF0386 family.

In Agrobacterium fabrum (strain C58 / ATCC 33970) (Agrobacterium tumefaciens (strain C58)), this protein is UPF0386 protein Atu1321.